The primary structure comprises 267 residues: Tryptophan 2,3-dioxygenase (267 aa).

Substrate is bound by residues 44–48 (FITIH) and R114. Heme is bound at residue H225. A substrate-binding site is contributed by T239.

It belongs to the tryptophan 2,3-dioxygenase family. As to quaternary structure, homotetramer. The cofactor is heme.

It catalyses the reaction L-tryptophan + O2 = N-formyl-L-kynurenine. It functions in the pathway amino-acid degradation; L-tryptophan degradation via kynurenine pathway; L-kynurenine from L-tryptophan: step 1/2. Functionally, heme-dependent dioxygenase that catalyzes the oxidative cleavage of the L-tryptophan (L-Trp) pyrrole ring and converts L-tryptophan to N-formyl-L-kynurenine. Catalyzes the oxidative cleavage of the indole moiety. The sequence is that of Tryptophan 2,3-dioxygenase from Nocardioides sp. (strain ATCC BAA-499 / JS614).